The sequence spans 300 residues: METQDHTLYVLLGPTGVGKTDLSLDIAERLGSPIISADSRQIFRELPIGTAAPTPEQRARVPHLFVGTHSVRDYYSAGMYEVEVLEALKELFRKYRGVLLTGGSMMYIDAVCRGIDDIPDPFPEVREELYARYAAEGLDGILAQLRLLDPDYYAKVDRRNYKRVIHGLEICLSTGRPFSSFHRHEAKERPFRIVKIGLYREREELCKRIDARVLEMMEQGLEEEARAVYPLRHLNALNTVGYKEMFEYFDGSIDRAEAVRRIQRNSRVYARKQMTWFRRDSTIRWFHPEADKGTVLTLVT.

Residue Gly-13–Thr-20 participates in ATP binding. Thr-15 to Thr-20 is a substrate binding site. An interaction with substrate tRNA region spans residues Asp-38–Gln-41.

It belongs to the IPP transferase family. Monomer. The cofactor is Mg(2+).

It carries out the reaction adenosine(37) in tRNA + dimethylallyl diphosphate = N(6)-dimethylallyladenosine(37) in tRNA + diphosphate. Its function is as follows. Catalyzes the transfer of a dimethylallyl group onto the adenine at position 37 in tRNAs that read codons beginning with uridine, leading to the formation of N6-(dimethylallyl)adenosine (i(6)A). This chain is tRNA dimethylallyltransferase 2, found in Porphyromonas gingivalis (strain ATCC 33277 / DSM 20709 / CIP 103683 / JCM 12257 / NCTC 11834 / 2561).